Here is a 328-residue protein sequence, read N- to C-terminus: Glycerol-3-phosphate dehydrogenase [NAD(P)+] (328 aa).

NADPH-binding residues include Trp15, Arg35, Arg36, and Lys105. 2 residues coordinate sn-glycerol 3-phosphate: Lys105 and Gly131. Position 135 (Ala135) interacts with NADPH. Residues Lys186, Asp239, Ser249, Arg250, and Asn251 each contribute to the sn-glycerol 3-phosphate site. Lys186 functions as the Proton acceptor in the catalytic mechanism. Arg250 contributes to the NADPH binding site. Val270 and Glu272 together coordinate NADPH.

It belongs to the NAD-dependent glycerol-3-phosphate dehydrogenase family.

It localises to the cytoplasm. It carries out the reaction sn-glycerol 3-phosphate + NAD(+) = dihydroxyacetone phosphate + NADH + H(+). The enzyme catalyses sn-glycerol 3-phosphate + NADP(+) = dihydroxyacetone phosphate + NADPH + H(+). It functions in the pathway membrane lipid metabolism; glycerophospholipid metabolism. Functionally, catalyzes the reduction of the glycolytic intermediate dihydroxyacetone phosphate (DHAP) to sn-glycerol 3-phosphate (G3P), the key precursor for phospholipid synthesis. The sequence is that of Glycerol-3-phosphate dehydrogenase [NAD(P)+] from Deinococcus radiodurans (strain ATCC 13939 / DSM 20539 / JCM 16871 / CCUG 27074 / LMG 4051 / NBRC 15346 / NCIMB 9279 / VKM B-1422 / R1).